A 189-amino-acid polypeptide reads, in one-letter code: Phomopsin biosynthesis cluster protein C' (189 aa).

It belongs to the oryJ family.

Its function is as follows. Part of the gene cluster that mediates the biosynthesis of the phomopsins, a group of hexapeptide mycotoxins which infects lupins and causes lupinosis disease in livestock. The role of phomC' within the phomopsins biosynthesis pathway has still to be determined. The pathway starts with the processing of the precursor phomA by several endopeptidases including kexin proteases as well as the cluster-specific S41 family peptidase phomP1 and the oligopeptidase phomG to produce 10 identical copies of the hexapeptide Tyr-Val-Ile-Pro-Ile-Asp. After being excised from the precursor peptide, the core peptides are cyclized and modified post-translationally by enzymes encoded within the gene cluster. The timing and order of proteolysis of the phomA precursor and PTMs are still unknown. Two tyrosinase-like enzymes, phomQ1 and phomQ2, catalyze the chlorination and hydroxylation of Tyr, respectively. PhomYb, is proposed to be involved in the construction of the macrocyclic structure. The other 4 ustYa family proteins may be involved in PTMs that generate the unique structure of phomopsin A. PhomYa is required for the hydroxylation of C-beta of Tyr. PhomYc, phomYd, and phomYe are responsible for the biosynthesis of 2,3-dehydroisoleucine (dIle), 2,3-dehydroaspartic acid (dAsp), and 3,4-dehydroproline (dPro), respectively. While dIle formation by phomYc is indispensable for the installation of dAsp by phomYd, the order of the other PTMs have not been elucidated yet. Most of the biosynthetic enzymes likely have broad substrate specificity, and thus, there might be a metabolic grid from a precursor to phomopsin A. The enzyme(s) responsible for the biosynthesis of 3,4-dehydrovaline (dVal) have also not been identified yet. Finally, phomM acts as an S-adenosylmethionine-dependent alpha-N-methyltransferase that catalyzes two successive N-methylation reactions, converting N-desmethyl-phomopsin A to phomopsin A and phomopsin A further to an N,N-dimethylated congener called phomopsin E. This is Phomopsin biosynthesis cluster protein C' from Diaporthe leptostromiformis (Lupinosis disease fungus).